The following is a 157-amino-acid chain: uncharacterized protein (157 aa).

The N-acetyltransferase domain occupies 9–154 (LLINYKTLDE…ETNLNAVTNE (146 aa)).

This is an uncharacterized protein from Bacillus cereus (strain B4264).